Here is a 394-residue protein sequence, read N- to C-terminus: Elongation factor Tu (394 aa).

Residues 10 to 204 (KPHVNIGTIG…AVDSYIPQPV (195 aa)) form the tr-type G domain. Residues 19-26 (GHVDHGKT) form a G1 region. 19–26 (GHVDHGKT) contributes to the GTP binding site. Residue Thr26 participates in Mg(2+) binding. A G2 region spans residues 60 to 64 (GITIS). A G3 region spans residues 81–84 (DCPG). Residues 81 to 85 (DCPGH) and 136 to 139 (NKVD) each bind GTP. Residues 136–139 (NKVD) form a G4 region. The tract at residues 174–176 (SAL) is G5.

Belongs to the TRAFAC class translation factor GTPase superfamily. Classic translation factor GTPase family. EF-Tu/EF-1A subfamily. As to quaternary structure, monomer.

The protein localises to the cytoplasm. The enzyme catalyses GTP + H2O = GDP + phosphate + H(+). Functionally, GTP hydrolase that promotes the GTP-dependent binding of aminoacyl-tRNA to the A-site of ribosomes during protein biosynthesis. In Rickettsia felis (strain ATCC VR-1525 / URRWXCal2) (Rickettsia azadi), this protein is Elongation factor Tu.